The primary structure comprises 1237 residues: Anion exchange protein 2 (1237 aa).

Positions 1 to 237 are disordered; the sequence is MSSAPRRPAS…SYNLQERRRI (237 aa). The Cytoplasmic segment spans residues 1–703; the sequence is MSSAPRRPAS…SDFRDALDPQ (703 aa). Basic and acidic residues-rich tracts occupy residues 37 to 49 and 58 to 75; these read ELHRTLGVERFEE and GGEEPGRSYGEEDFEYHR. Composition is skewed to basic residues over residues 76-85 and 94-110; these read QSSHHIHHPL and RRRKTPQGPGRKPRRRP. A Phosphoserine modification is found at Ser-113. The span at 122-133 shows a compositional bias: acidic residues; that stretch reads EEGEEDEEEANE. Positions 137–151 are enriched in low complexity; the sequence is ARAPTEPSPASTPSS. Ser-144, Ser-170, and Ser-172 each carry phosphoserine. The span at 206–215 shows a compositional bias: gly residues; sequence TAGGDNGGAS. A Phosphoserine modification is found at Ser-239. At Thr-253 the chain carries Phosphothreonine. The residue at position 270 (Lys-270) is an N6-methyllysine. Residues 281–316 are disordered; it reads RRHLVRKNAKGSAQSSREGREPGPTPRSRPRAPHKP. Ser-439 carries the phosphoserine modification. Residues 445–464 are disordered; it reads SLLGHHHGQGAESDPHVTEP. 4 consecutive transmembrane segments (helical) span residues 704 to 727, 733 to 770, 790 to 812, and 822 to 843; these read CVAAVIFIYFAALSPAITFGGLLG, LIGVSELIMSTALQGVIFCLLGAQPLLVIGFSGPLLVF, VWIGFWLVLLALLMVALEGSFLV, and IFAFLISLIFIYETFYKLIKIF. The segment at 704 to 1237 is membrane (anion exchange); the sequence is CVAAVIFIYF…DEYNEMPMPV (534 aa). The Extracellular portion of the chain corresponds to 844-896; that stretch reads QEHPLHGCSVSNSSETDSSENATWAGAGSTLGPANRSSAGQAGQGRPRGQPNT. 3 N-linked (GlcNAc...) asparagine glycosylation sites follow: Asn-855, Asn-864, and Asn-878. Residues 897–914 traverse the membrane as a helical segment; the sequence is ALLSLVLMAGTFFIAFFL. The Cytoplasmic segment spans residues 915–929; sequence RKFKNSRFFPGRIRR. A run of 5 helical transmembrane segments spans residues 930–950, 984–1006, 1032–1053, 1087–1132, and 1159–1195; these read VIGDFGVPIAILIMVLVDYSI, PFPVWMMVASLLPAILVFILIFM, LLLIVAMGGICALFGLPWLAAA, VTGL…IQFY, and MHLFTALQLLCLALLWAVMSTAASLAFPFILILTVPL. Cys-1169 carries S-palmitoyl cysteine lipidation.

Belongs to the anion exchanger (TC 2.A.31) family. As to expression, expressed in the ileum (at protein level).

It localises to the cell membrane. It is found in the apical cell membrane. Its subcellular location is the basolateral cell membrane. It carries out the reaction hydrogencarbonate(in) + chloride(out) = hydrogencarbonate(out) + chloride(in). In terms of biological role, sodium-independent anion exchanger which mediates the electroneutral exchange of chloride for bicarbonate ions across the cell membrane. Plays an important role in osteoclast differentiation and function. Regulates bone resorption and calpain-dependent actin cytoskeleton organization in osteoclasts via anion exchange-dependent control of pH. Essential for intracellular pH regulation in CD8(+) T-cells upon CD3 stimulation, modulating CD8(+) T-cell response. The sequence is that of Anion exchange protein 2 (SLC4A2) from Oryctolagus cuniculus (Rabbit).